The following is a 1258-amino-acid chain: Splicing factor, arginine/serine-rich 19 (1258 aa).

6 disordered regions span residues 1–32 (MEEEDESRGKTEESGEDRGDGPPDRDPALSPS), 159–345 (KTVS…PRRR), 370–398 (GGPALPLPPLPPTDPEIEEGEIVQPEEEP), 410–1034 (PRQP…PPPM), 1114–1154 (GSLP…DKYL), and 1223–1258 (FRKHGRKPGDPPGPPRPPKEPGPPDKGGPGLPLPPL). The span at 7 to 27 (SRGKTEESGEDRGDGPPDRDP) shows a compositional bias: basic and acidic residues. The span at 193–207 (SSASSSPSPSPSSSS) shows a compositional bias: low complexity. Residues 208 to 223 (PSPPPPPPPPPPPALP) show a composition bias toward pro residues. Residues 228 to 237 (DIYDPFHPTD) show a composition bias toward basic and acidic residues. Residue Ser241 is modified to Phosphoserine. Residues 256–266 (TGSNPSSSAGT) show a composition bias toward polar residues. Residues 269-283 (PEEEEEEEEEEEEEG) show a composition bias toward acidic residues. A Phosphothreonine modification is found at Thr329. The span at 374–383 (LPLPPLPPTD) shows a compositional bias: pro residues. Residues 384–395 (PEIEEGEIVQPE) are compositionally biased toward acidic residues. A compositionally biased stretch (low complexity) spans 414-426 (PASVATLASVAAP). 2 positions are modified to phosphoserine: Ser444 and Ser449. Over residues 480 to 491 (KILTQRRERYRQ) the composition is skewed to basic residues. A phosphoserine mark is found at Ser493, Ser495, Ser512, and Ser520. Basic residues-rich tracts occupy residues 540-555 (TARRRSRSRSRRRSRS) and 562-579 (RGSHRSRSREKRRRRRRS). A phosphoserine mark is found at Ser579 and Ser581. The segment covering 594–613 (RERHRGKRREGGKKKKKRSR) has biased composition (basic residues). A compositionally biased stretch (basic and acidic residues) spans 614–625 (SRAEKRSGDLEK). A Phosphothreonine modification is found at Thr665. A phosphoserine mark is found at Ser678 and Ser684. Tyr691 bears the Phosphotyrosine mark. 2 positions are modified to phosphoserine: Ser693 and Ser697. Composition is skewed to basic and acidic residues over residues 698–711 (ADERGAKGDKDRRR) and 721–743 (SREKASRRKALDGDRGRDRDRSS). 2 stretches are compositionally biased toward low complexity: residues 752–777 (SAPGSGALPKAPPSSGSSSSSSSCSS) and 795–806 (SSTTPAKDSSSS). Lys814 is covalently cross-linked (Glycyl lysine isopeptide (Lys-Gly) (interchain with G-Cter in SUMO2)). Residues 815-833 (FSRDRESRSPFLKPDERAP) are compositionally biased toward basic and acidic residues. 2 positions are modified to phosphoserine: Ser821 and Ser823. Basic residues predominate over residues 845–877 (KPKKTKAKAKAGAKKAKGTKGKTKPSKTRKKVR). Phosphoserine occurs at positions 878, 885, 912, and 914. The span at 924–937 (STPPPKVAPPPPAL) shows a compositional bias: pro residues. Phosphothreonine is present on residues Thr925 and Thr938. The span at 940–949 (DSQTVDSSCK) shows a compositional bias: polar residues. Position 941 is a phosphoserine (Ser941). The residue at position 950 (Thr950) is a Phosphothreonine. Over residues 971-986 (EEEEEEEEEEEEEEEQ) the composition is skewed to acidic residues. Residues 987–1019 (QPATTTATSTAAAAPSTAPSAGSTAGDSGAEDG) are compositionally biased toward low complexity. The segment at 1133–1258 (PASDKREGSS…GGPGLPLPPL (126 aa)) is necessary for interaction with the CTD domain of POLR2A. Basic and acidic residues predominate over residues 1135–1154 (SDKREGSSSSEGRGDTDKYL). Residues 1246–1258 (PDKGGPGLPLPPL) are compositionally biased toward pro residues.

This sequence belongs to the splicing factor SR family. In terms of assembly, interacts with POLR2A.

It localises to the nucleus. Its function is as follows. May function in pre-mRNA splicing. This chain is Splicing factor, arginine/serine-rich 19 (Scaf1), found in Rattus norvegicus (Rat).